The primary structure comprises 137 residues: Large-conductance mechanosensitive channel (137 aa).

2 helical membrane-spanning segments follow: residues 14–34 (VLDL…INSL) and 81–101 (GSFL…FLIV).

Belongs to the MscL family. As to quaternary structure, homopentamer.

It is found in the cell membrane. Functionally, channel that opens in response to stretch forces in the membrane lipid bilayer. May participate in the regulation of osmotic pressure changes within the cell. This chain is Large-conductance mechanosensitive channel, found in Chloroflexus aggregans (strain MD-66 / DSM 9485).